The sequence spans 640 residues: Threonine--tRNA ligase (640 aa).

Residues 1–61 (MPIITLPDGS…ERDATLQIIT (61 aa)) form the TGS domain. Positions 242 to 533 (DHRRIGKQLD…LIEHYAGAFP (292 aa)) are catalytic. The Zn(2+) site is built by C333, H384, and H510.

It belongs to the class-II aminoacyl-tRNA synthetase family. As to quaternary structure, homodimer. It depends on Zn(2+) as a cofactor.

The protein resides in the cytoplasm. It catalyses the reaction tRNA(Thr) + L-threonine + ATP = L-threonyl-tRNA(Thr) + AMP + diphosphate + H(+). Catalyzes the attachment of threonine to tRNA(Thr) in a two-step reaction: L-threonine is first activated by ATP to form Thr-AMP and then transferred to the acceptor end of tRNA(Thr). Also edits incorrectly charged L-seryl-tRNA(Thr). In Pseudomonas paraeruginosa (strain DSM 24068 / PA7) (Pseudomonas aeruginosa (strain PA7)), this protein is Threonine--tRNA ligase.